The sequence spans 382 residues: Small ribosomal subunit protein bS1 homolog (382 aa).

S1 motif domains follow at residues 16–84 (GDVV…LSKR), 102–167 (KEVF…LSHR), 188–256 (GSVL…LSIK), and 273–342 (GDVL…LSMR). Ser243 is modified (phosphoserine).

This sequence belongs to the bacterial ribosomal protein bS1 family.

Plays a role in sporulation. Cannot be expressed in wild-type E.coli, does not complement an E.coli rpsA deletion. This Bacillus subtilis (strain 168) protein is Small ribosomal subunit protein bS1 homolog.